The sequence spans 472 residues: Bone morphogenetic protein 3 (472 aa).

Positions 1-22 (MAGASRLLFLWLGCFCVSLAQG) are cleaved as a signal peptide. A propeptide spanning residues 23 to 362 (ERPKPPFPEL…EQTLKKARRK (340 aa)) is cleaved from the precursor. Basic and acidic residues predominate over residues 27–37 (PPFPELRKAVP). Residues 27 to 53 (PPFPELRKAVPGDRTAGGGPDSELQPQ) are disordered. Asn117, Asn141, Asn175, and Asn220 each carry an N-linked (GlcNAc...) asparagine glycan. Residues 320–350 (PYKTLQAQAPEKSKNKKKQRKGPHRKSQTLQ) form a disordered region. The segment covering 333 to 346 (KNKKKQRKGPHRKS) has biased composition (basic residues). 3 disulfides stabilise this stretch: Cys370–Cys437, Cys399–Cys469, and Cys403–Cys471. Residue Asn463 is glycosylated (N-linked (GlcNAc...) asparagine).

The protein belongs to the TGF-beta family. In terms of assembly, homodimer; disulfide-linked. Interacts with type II receptor ACVR2B. In terms of tissue distribution, expressed in adult and fetal cartilage.

The protein resides in the secreted. Functionally, growth factor of the TGF-beta superfamily that plays an essential role in developmental process by inducing and patterning early skeletal formation and by negatively regulating bone density. Antagonizes the ability of certain osteogenic BMPs to induce osteoprogenitor differentiation and ossification. Initiates signaling cascades by associating with type II receptor ACVR2B to activate SMAD2-dependent and SMAD-independent signaling cascades including TAK1 and JNK pathways. The polypeptide is Bone morphogenetic protein 3 (BMP3) (Homo sapiens (Human)).